Here is a 406-residue protein sequence, read N- to C-terminus: MMTSCRNIDLGTMMMACGCGRRQFPSLAKTVCKFTSSNRSYGGLVGSCKAVPTKSKEISLLNGIGQSQTVSFDLKQESKQPISLVTLFELVAVDLQTLNDNLLSIVGAENPVLISAAEQIFGAGGKRMRPGLVFLVSHATAELAGLKELTTEHRRLAEIIEMIHTASLIHDDVLDESDMRRGKETVHELFGTRVAVLAGDFMFAQASWYLANLENLEVIKLISQVIKDFASGEIKQASSLFDCDTKLDEYLLKSFYKTASLVAASTKGAAIFSRVEPDVTEQMYEFGKNLGLSFQIVDDILDFTQSTEQLGKPAGSDLAKGNLTAPVIFALEREPRLREIIESEFCEAGSLEEAIEAVTKGGGIKRAQELAREKADDAIKNLQCLPRSGFRSALEDMVLYNLERID.

A chloroplast-targeting transit peptide spans 1-71 (MMTSCRNIDL…NGIGQSQTVS (71 aa)). 3 residues coordinate isopentenyl diphosphate: Lys126, Arg129, and His164. Residues Asp171 and Asp175 each coordinate Mg(2+). Residue Arg180 participates in an all-trans-polyprenyl diphosphate binding. Arg181 is an isopentenyl diphosphate binding site. An all-trans-polyprenyl diphosphate-binding residues include Lys257, Thr258, Gln295, and Lys312.

This sequence belongs to the FPP/GGPP synthase family. In terms of assembly, homodimer. Interacts with FBN5. It depends on Mg(2+) as a cofactor. As to expression, higher expression in leaves than in roots.

The protein resides in the plastid. It localises to the chloroplast. It catalyses the reaction 5 isopentenyl diphosphate + (2E,6E,10E)-geranylgeranyl diphosphate = all-trans-nonaprenyl diphosphate + 5 diphosphate. It carries out the reaction isopentenyl diphosphate + (2E,6E)-farnesyl diphosphate = (2E,6E,10E)-geranylgeranyl diphosphate + diphosphate. In terms of biological role, involved in providing solanesyl diphosphate for plastoquinone-9 (PQ-9) formation in plastids. Catalyzes the elongation of the prenyl side chain of PQ-9 in plastids. Contributes to the biosynthesis of plastochromanol-8 (PC-8) in plastids. Does not contribute to the synthesis of tocopherol or ubiquinone. PQ-9 and PC-8 are lipophilic antioxidants that act as protectant against photooxidative stress under high light stress conditions. Prefers geranylgeranyl diphosphate to farnesyl diphosphate as substrate. No activity with geranyl diphosphate or dimethylallyl diphosphate as substrate. The sequence is that of Solanesyl diphosphate synthase 1, chloroplastic from Arabidopsis thaliana (Mouse-ear cress).